A 198-amino-acid chain; its full sequence is uncharacterized protein (198 aa).

This sequence to A.aeolicus aq_1211 and aq_1583.

This is an uncharacterized protein from Aquifex aeolicus (strain VF5).